The following is a 116-amino-acid chain: NADPH-dependent 7-cyano-7-deazaguanine reductase (116 aa).

The active-site Thioimide intermediate is C31. Residue D38 is the Proton donor of the active site. Residues 53–55 and 72–73 contribute to the substrate site; these read VEL and YE.

Belongs to the GTP cyclohydrolase I family. QueF type 1 subfamily.

Its subcellular location is the cytoplasm. It carries out the reaction 7-aminomethyl-7-carbaguanine + 2 NADP(+) = 7-cyano-7-deazaguanine + 2 NADPH + 3 H(+). It functions in the pathway tRNA modification; tRNA-queuosine biosynthesis. Functionally, catalyzes the NADPH-dependent reduction of 7-cyano-7-deazaguanine (preQ0) to 7-aminomethyl-7-deazaguanine (preQ1). The polypeptide is NADPH-dependent 7-cyano-7-deazaguanine reductase (Chlorobium phaeobacteroides (strain DSM 266 / SMG 266 / 2430)).